Reading from the N-terminus, the 475-residue chain is Protein trichome birefringence-like 6 (475 aa).

The chain crosses the membrane as a helical; Signal-anchor for type II membrane protein span at residues 14–34; the sequence is VLAFIITIISSAIVFFTFFSS. Positions 211 to 213 match the GDS motif motif; it reads GDS. Residues 450 to 464 carry the DCXHWCLPGXXDXWN motif motif; it reads DCSHWCLPGVPDTWN.

This sequence belongs to the PC-esterase family. TBL subfamily.

The protein localises to the membrane. In terms of biological role, may act as a bridging protein that binds pectin and other cell wall polysaccharides. Probably involved in maintaining esterification of pectins. May be involved in the specific O-acetylation of cell wall polymers. The sequence is that of Protein trichome birefringence-like 6 (TBL6) from Arabidopsis thaliana (Mouse-ear cress).